Here is an 885-residue protein sequence, read N- to C-terminus: GPI ethanolamine phosphate transferase 2 (885 aa).

3 N-linked (GlcNAc...) asparagine glycosylation sites follow: Asn82, Asn155, and Asn194. Residues 413 to 433 (DIYAGALILVITALAVIVVFN) form a helical membrane-spanning segment. Asn443 carries N-linked (GlcNAc...) asparagine glycosylation. Transmembrane regions (helical) follow at residues 447-467 (VMFY…SSLI), 473-493 (IWYF…FDTF), and 495-514 (SLQN…FMRS). Residue Asn516 is glycosylated (N-linked (GlcNAc...) asparagine). The next 8 helical transmembrane spans lie at 539–559 (LMWG…YIQG), 581–601 (GLIS…FKLL), 648–668 (IQLS…RVII), 697–717 (ENIP…KLIY), 726–746 (YILT…FCMG), 768–788 (VFLV…FWSL), 820–840 (ILLV…VNLV), and 865–885 (SWIL…VLLF).

It belongs to the PIGG/PIGN/PIGO family. PIGG subfamily.

The protein localises to the endoplasmic reticulum membrane. Its pathway is glycolipid biosynthesis; glycosylphosphatidylinositol-anchor biosynthesis. Its function is as follows. Ethanolamine phosphate transferase involved in glycosylphosphatidylinositol-anchor biosynthesis. Transfers ethanolamine phosphate to the GPI second mannose. This Candida albicans (strain SC5314 / ATCC MYA-2876) (Yeast) protein is GPI ethanolamine phosphate transferase 2 (GPI7).